The primary structure comprises 216 residues: Acetate CoA-transferase subunit beta (216 aa).

Residue Glu46 is part of the active site.

It belongs to the 3-oxoacid CoA-transferase subunit B family. In terms of assembly, heterotetramer composed of two alpha subunits (AtoD) and two beta subunits (AtoA).

Its subcellular location is the cytoplasm. It catalyses the reaction an acyl-CoA + acetate = a carboxylate + acetyl-CoA. The catalysed reaction is acetoacetate + acetyl-CoA = acetoacetyl-CoA + acetate. The enzyme catalyses butanoate + acetyl-CoA = butanoyl-CoA + acetate. It carries out the reaction acetoacetate + butanoyl-CoA = acetoacetyl-CoA + butanoate. It participates in lipid metabolism; short-chain fatty acid metabolism. With respect to regulation, inhibited by p-chloromercuribenzoate. In terms of biological role, coenzyme A transferase which is involved in short-chain fatty acid degradation and catalyzes the activation of short-chain fatty acids to their respective CoA thiolesters. During acetoacetate degradation, catalyzes the transfer of CoA from acetyl-CoA to acetoacetate by a mechanism involving a covalent enzyme-CoA compound as a reaction intermediate. Utilizes a variety of short chain acyl-CoA and carboxylic acid substrates but exhibits maximal activity with normal and 3-keto substrates. This Escherichia coli (strain K12) protein is Acetate CoA-transferase subunit beta.